Consider the following 521-residue polypeptide: Apolipoprotein N-acyltransferase (521 aa).

The next 6 membrane-spanning stretches (helical) occupy residues 27–47, 64–84, 93–113, 125–145, 167–187, and 202–222; these read VLLA…IAFA, LGFV…TIVV, IVSV…PAVV, ISLL…RAFL, IADI…NVVL, and YPVK…AYGF. The 245-residue stretch at 239 to 483 folds into the CN hydrolase domain; it reads IQGNIDQNIK…EAVLNGEVRL (245 aa). The active-site Proton acceptor is the E281. The active site involves K344. The active-site Nucleophile is C394. Residues 493 to 513 form a helical membrane-spanning segment; sequence YGDVFAWACVAGAAVVAALAF.

Belongs to the CN hydrolase family. Apolipoprotein N-acyltransferase subfamily.

It is found in the cell inner membrane. It catalyses the reaction N-terminal S-1,2-diacyl-sn-glyceryl-L-cysteinyl-[lipoprotein] + a glycerophospholipid = N-acyl-S-1,2-diacyl-sn-glyceryl-L-cysteinyl-[lipoprotein] + a 2-acyl-sn-glycero-3-phospholipid + H(+). It participates in protein modification; lipoprotein biosynthesis (N-acyl transfer). Its function is as follows. Catalyzes the phospholipid dependent N-acylation of the N-terminal cysteine of apolipoprotein, the last step in lipoprotein maturation. This Geobacter metallireducens (strain ATCC 53774 / DSM 7210 / GS-15) protein is Apolipoprotein N-acyltransferase.